We begin with the raw amino-acid sequence, 158 residues long: Large ribosomal subunit protein uL11 (158 aa).

This sequence belongs to the universal ribosomal protein uL11 family. As to quaternary structure, part of the ribosomal stalk of the 50S ribosomal subunit. Interacts with L10 and the large rRNA to form the base of the stalk. L10 forms an elongated spine to which L12 dimers bind in a sequential fashion forming a multimeric L10(L12)X complex.

Forms part of the ribosomal stalk which helps the ribosome interact with GTP-bound translation factors. In Methanocella arvoryzae (strain DSM 22066 / NBRC 105507 / MRE50), this protein is Large ribosomal subunit protein uL11.